A 220-amino-acid chain; its full sequence is Fructose-6-phosphate aldolase 1 (220 aa).

Residue K85 is the Schiff-base intermediate with substrate of the active site.

It belongs to the transaldolase family. Type 3A subfamily. In terms of assembly, homodecamer.

The protein localises to the cytoplasm. The catalysed reaction is beta-D-fructose 6-phosphate = dihydroxyacetone + D-glyceraldehyde 3-phosphate. Functionally, catalyzes the reversible formation of fructose 6-phosphate from dihydroxyacetone and D-glyceraldehyde 3-phosphate via an aldolization reaction. The sequence is that of Fructose-6-phosphate aldolase 1 (fsaA) from Escherichia coli O157:H7.